A 167-amino-acid polypeptide reads, in one-letter code: Transcription antitermination protein NusB (167 aa).

The tract at residues 1-32 is disordered; sequence MSDTPETGKPAAGTKPAARTEAKAPPKSARRR.

The protein belongs to the NusB family.

Functionally, involved in transcription antitermination. Required for transcription of ribosomal RNA (rRNA) genes. Binds specifically to the boxA antiterminator sequence of the ribosomal RNA (rrn) operons. This chain is Transcription antitermination protein NusB, found in Cupriavidus pinatubonensis (strain JMP 134 / LMG 1197) (Cupriavidus necator (strain JMP 134)).